The chain runs to 531 residues: T-complex protein 1 subunit zeta (531 aa).

Ala2 carries the N-acetylalanine modification. An N6-acetyllysine modification is found at Lys5. Gly39 is an ADP binding site. Gly39 is a binding site for ATP. Residue Asp90 participates in Mg(2+) binding. ADP is bound by residues Gly91, Thr92, Thr93, Ser94, Thr158, and Lys159. ATP-binding residues include Gly91, Thr92, and Thr93. Position 199 is an N6-acetyllysine (Lys199). A Phosphoserine modification is found at Ser205. A Glycyl lysine isopeptide (Lys-Gly) (interchain with G-Cter in SUMO2) cross-link involves residue Lys251. N6-acetyllysine is present on residues Lys287, Lys365, Lys377, and Lys388. Position 411 (Ala411) interacts with ADP. ATP is bound by residues Ala411, Gly412, Asp496, and Lys501. Asp496 is an ADP binding site.

The protein belongs to the TCP-1 chaperonin family. In terms of assembly, component of the chaperonin-containing T-complex (TRiC), a hexadecamer composed of two identical back-to-back stacked rings enclosing a protein folding chamber. Each ring is made up of eight different subunits: TCP1/CCT1, CCT2, CCT3, CCT4, CCT5, CCT6A/CCT6, CCT7, CCT8. Interacts with PACRG.

Its subcellular location is the cytoplasm. The catalysed reaction is ATP + H2O = ADP + phosphate + H(+). Component of the chaperonin-containing T-complex (TRiC), a molecular chaperone complex that assists the folding of actin, tubulin and other proteins upon ATP hydrolysis. The TRiC complex mediates the folding of WRAP53/TCAB1, thereby regulating telomere maintenance. This is T-complex protein 1 subunit zeta (CCT6) from Pongo abelii (Sumatran orangutan).